Consider the following 348-residue polypeptide: MMFTSESDLMRTIDWNEESNSVVLVDQTLLPQEYKVIECKTLSSLCEAIKSLRIRGAPALGAAGGFGIALAASLSGAKDLESMTRDLKVAAKALKSTRSTAVNLGWGVDRVLNAISDAFDVQGARDIALQEARDIAEEDIATNKLIGKYGTKFLKDGDSVLTHCNAGRLACVDWGTALGVVRSAIEEGKEIKVIACETRPLNQGSRITTWELMQDKIPVTLIADSMAGWAMHQGLVDSVLVGADRITQDVVFNKIGTYTHSILAKEHEIPFYVAAPISTFDFKGWEGSVKIEMRDPDELRFSGCQQLAPKDVEVYNPAFDATPMENVTAIITDKGVFYPPFLLDEVLV.

Substrate contacts are provided by residues 55–57, Arg-98, and Gln-203; that span reads RGA. Residue Asp-244 is the Proton donor of the active site. Position 253-254 (253-254) interacts with substrate; that stretch reads NK.

The protein belongs to the eIF-2B alpha/beta/delta subunits family. MtnA subfamily.

The enzyme catalyses 5-(methylsulfanyl)-alpha-D-ribose 1-phosphate = 5-(methylsulfanyl)-D-ribulose 1-phosphate. Functionally, catalyzes the interconversion of methylthioribose-1-phosphate (MTR-1-P) into methylthioribulose-1-phosphate (MTRu-1-P). This is Putative methylthioribose-1-phosphate isomerase from Methanosarcina acetivorans (strain ATCC 35395 / DSM 2834 / JCM 12185 / C2A).